Consider the following 70-residue polypeptide: Delta-hexatoxin-Mg1b (70 aa).

The N-terminal stretch at 1-26 (MKILEKALLENDSAAEEESRNLRTKR) is a signal peptide. 4 disulfides stabilise this stretch: C27-C41, C34-C46, C40-C57, and C42-C68.

Expressed by the venom gland.

Its subcellular location is the secreted. Functionally, inhibits tetrodotoxin-sensitive sodium channels (Nav). Intracranial injection into mice causes strong convulsions and death. Intrathorax injection into crickets causes paralysis prolonged for 2 minutes, followed by recovery. The polypeptide is Delta-hexatoxin-Mg1b (Macrothele gigas (Japanese funnel web spider)).